The following is a 259-amino-acid chain: Small ribosomal subunit protein eS1 (259 aa).

Disordered stretches follow at residues 1–23 and 235–259; these read MAVG…KTAD and ESKS…VDSV. Positions 8–19 are enriched in basic residues; sequence KVTKGGKKGGKK. Basic and acidic residues predominate over residues 246-259; that stretch reads SRPDHYEPPKVDSV.

Belongs to the eukaryotic ribosomal protein eS1 family. As to quaternary structure, component of the small ribosomal subunit. Mature ribosomes consist of a small (40S) and a large (60S) subunit. The 40S subunit contains about 33 different proteins and 1 molecule of RNA (18S). The 60S subunit contains about 49 different proteins and 3 molecules of RNA (28S, 5.8S and 5S).

Its subcellular location is the cytoplasm. This chain is Small ribosomal subunit protein eS1, found in Schistosoma japonicum (Blood fluke).